We begin with the raw amino-acid sequence, 155 residues long: Small ribosomal subunit protein uS7 (155 aa).

The protein belongs to the universal ribosomal protein uS7 family. Part of the 30S ribosomal subunit. Contacts proteins S9 and S11.

One of the primary rRNA binding proteins, it binds directly to 16S rRNA where it nucleates assembly of the head domain of the 30S subunit. Is located at the subunit interface close to the decoding center, probably blocks exit of the E-site tRNA. The protein is Small ribosomal subunit protein uS7 of Chlorobium chlorochromatii (strain CaD3).